The following is a 406-amino-acid chain: Dual-specificity RNA methyltransferase RlmN (406 aa).

Glu119 serves as the catalytic Proton acceptor. A Radical SAM core domain is found at 125-370; that stretch reads DKGRGTLCVS…AMVRRTRGDD (246 aa). Cys132 and Cys375 are joined by a disulfide. [4Fe-4S] cluster is bound by residues Cys139, Cys143, and Cys146. Residues 192–193, Ser224, 246–248, and Asn332 contribute to the S-adenosyl-L-methionine site; these read GE and SLH. The active-site S-methylcysteine intermediate is the Cys375.

Belongs to the radical SAM superfamily. RlmN family. It depends on [4Fe-4S] cluster as a cofactor.

It localises to the cytoplasm. It catalyses the reaction adenosine(2503) in 23S rRNA + 2 reduced [2Fe-2S]-[ferredoxin] + 2 S-adenosyl-L-methionine = 2-methyladenosine(2503) in 23S rRNA + 5'-deoxyadenosine + L-methionine + 2 oxidized [2Fe-2S]-[ferredoxin] + S-adenosyl-L-homocysteine. The catalysed reaction is adenosine(37) in tRNA + 2 reduced [2Fe-2S]-[ferredoxin] + 2 S-adenosyl-L-methionine = 2-methyladenosine(37) in tRNA + 5'-deoxyadenosine + L-methionine + 2 oxidized [2Fe-2S]-[ferredoxin] + S-adenosyl-L-homocysteine. Its function is as follows. Specifically methylates position 2 of adenine 2503 in 23S rRNA and position 2 of adenine 37 in tRNAs. m2A2503 modification seems to play a crucial role in the proofreading step occurring at the peptidyl transferase center and thus would serve to optimize ribosomal fidelity. The polypeptide is Dual-specificity RNA methyltransferase RlmN (Xylella fastidiosa (strain Temecula1 / ATCC 700964)).